A 142-amino-acid polypeptide reads, in one-letter code: Prefoldin subunit alpha 2 (142 aa).

The protein belongs to the prefoldin subunit alpha family. In terms of assembly, heterohexamer of two alpha and four beta subunits.

It localises to the cytoplasm. Its function is as follows. Molecular chaperone capable of stabilizing a range of proteins. Seems to fulfill an ATP-independent, HSP70-like function in archaeal de novo protein folding. This is Prefoldin subunit alpha 2 from Thermococcus kodakarensis (strain ATCC BAA-918 / JCM 12380 / KOD1) (Pyrococcus kodakaraensis (strain KOD1)).